We begin with the raw amino-acid sequence, 1468 residues long: ABC transporter G family member 34 (1468 aa).

The disordered stretch occupies residues 33–53; it reads NGAFSRSSSSSSRRMRGEEDD. One can recognise an ABC transporter 1 domain in the interval 178 to 450; it reads ANALGILPTR…FELMGFKCPE (273 aa). Position 211–218 (211–218) interacts with ATP; that stretch reads GPPGSGKT. One can recognise an ABC transmembrane type-2 1 domain in the interval 528–741; the sequence is ELLKANIDRE…AQNAVSVNEF (214 aa). 6 helical membrane-spanning segments follow: residues 546-566, 575-595, 634-654, 666-686, 690-710, and 778-798; these read FVYIFRTIQLMTVSAMAMTVF, SVADGVIFMGALFFAVMMIML, SPMSFIEVGGFCFMSYYVIGF, LLMLAVSQMAAALFRFVGGAA, IVANVFGSFMLLIFMVLGGFI, and IGFGALLGFIMLFNILFTLAL. The 253-residue stretch at 871–1123 folds into the ABC transporter 2 domain; the sequence is LTFEDIKYSV…ELIKYFEGIQ (253 aa). Residue 916-923 coordinates ATP; it reads GVSGAGKT. The region spanning 1196–1410 is the ABC transmembrane type-2 2 domain; that stretch reads IQCLACLWKQ…TLYGLIVSQY (215 aa). A run of 7 helical transmembrane segments spans residues 1217-1237, 1247-1267, 1303-1323, 1330-1350, 1360-1380, 1387-1407, and 1440-1460; these read AIRLFFTTVIALIFGTIFWDL, LFNAMGSMYAAVLFIGVLNGQ, FPYTLVQSVIYSIIVYSMIGF, FFWYLFFMFFTLLYFTFYGMM, VASIVSSAFYAIWNLFTGFVI, VWWRWYCWICPVAWTLYGLIV, and FVAVVIVAFTMLFAFLFGFAI.

The protein belongs to the ABC transporter superfamily. ABCG family. PDR (TC 3.A.1.205) subfamily.

The protein localises to the membrane. In terms of biological role, may be a general defense protein. This chain is ABC transporter G family member 34, found in Oryza sativa subsp. japonica (Rice).